A 556-amino-acid polypeptide reads, in one-letter code: Zinc finger protein GLI1 (556 aa).

3 disordered regions span residues 57 to 83 (TEHP…KKRA), 133 to 178 (SLGY…TPAR), and 200 to 222 (KYPE…QDPL). Low complexity predominate over residues 135 to 148 (GYQNPPGQQKGQGQ). 5 consecutive C2H2-type zinc fingers follow at residues 247–272 (TNCY…NNEH), 280–307 (FVCH…MRRH), 313–337 (HKCT…LRSH), 343–368 (YVCE…NRTH), and 374–399 (YICK…KTVH). Residues 295–303 (KAQYMLVVH) are interaction with DNA. Interaction with DNA stretches follow at residues 357–362 (ASDRAK) and 387–393 (DPSSLRK). Positions 387-492 (DPSSLRKHVK…VEMTGNTGGS (106 aa)) are disordered. Residues 454-472 (SKPQPSPGGQSSCSSDRSP) show a composition bias toward low complexity.

It belongs to the GLI C2H2-type zinc-finger protein family.

The protein localises to the cytoplasm. It localises to the nucleus. Functionally, acts as a transcriptional activator. Binds to the DNA consensus sequence 5'-GACCACCCA-3'. May regulate the transcription of specific genes during normal development. May play a role in craniofacial development and digital development, as well as development of the central nervous system and gastrointestinal tract. Mediates SHH signaling. Plays a role in cell proliferation and differentiation via its role in SHH signaling. This chain is Zinc finger protein GLI1 (GLI1), found in Gallus gallus (Chicken).